Reading from the N-terminus, the 101-residue chain is Small ribosomal subunit protein bS18c (101 aa).

The segment covering Met-1–Leu-19 has biased composition (basic residues). The tract at residues Met-1–Ser-24 is disordered.

This sequence belongs to the bacterial ribosomal protein bS18 family. Part of the 30S ribosomal subunit.

It localises to the plastid. Its subcellular location is the chloroplast. This is Small ribosomal subunit protein bS18c from Amborella trichopoda.